The sequence spans 149 residues: D-aminoacyl-tRNA deacylase (149 aa).

The Gly-cisPro motif, important for rejection of L-amino acids signature appears at 137–138; it reads GP.

The protein belongs to the DTD family. As to quaternary structure, homodimer.

The protein localises to the cytoplasm. It catalyses the reaction glycyl-tRNA(Ala) + H2O = tRNA(Ala) + glycine + H(+). The catalysed reaction is a D-aminoacyl-tRNA + H2O = a tRNA + a D-alpha-amino acid + H(+). In terms of biological role, an aminoacyl-tRNA editing enzyme that deacylates mischarged D-aminoacyl-tRNAs. Also deacylates mischarged glycyl-tRNA(Ala), protecting cells against glycine mischarging by AlaRS. Acts via tRNA-based rather than protein-based catalysis; rejects L-amino acids rather than detecting D-amino acids in the active site. By recycling D-aminoacyl-tRNA to D-amino acids and free tRNA molecules, this enzyme counteracts the toxicity associated with the formation of D-aminoacyl-tRNA entities in vivo and helps enforce protein L-homochirality. The protein is D-aminoacyl-tRNA deacylase of Koribacter versatilis (strain Ellin345).